Reading from the N-terminus, the 203-residue chain is FMN-dependent NADH:quinone oxidoreductase 1 (203 aa).

Residues serine 9, 15–17 (SAS), 95–98 (MYNF), and 139–142 (TAGG) each bind FMN.

This sequence belongs to the azoreductase type 1 family. As to quaternary structure, homodimer. Requires FMN as cofactor.

It catalyses the reaction 2 a quinone + NADH + H(+) = 2 a 1,4-benzosemiquinone + NAD(+). The catalysed reaction is N,N-dimethyl-1,4-phenylenediamine + anthranilate + 2 NAD(+) = 2-(4-dimethylaminophenyl)diazenylbenzoate + 2 NADH + 2 H(+). In terms of biological role, quinone reductase that provides resistance to thiol-specific stress caused by electrophilic quinones. Also exhibits azoreductase activity. Catalyzes the reductive cleavage of the azo bond in aromatic azo compounds to the corresponding amines. The protein is FMN-dependent NADH:quinone oxidoreductase 1 of Pseudomonas putida (strain ATCC 47054 / DSM 6125 / CFBP 8728 / NCIMB 11950 / KT2440).